A 338-amino-acid polypeptide reads, in one-letter code: F420-dependent glucose-6-phosphate dehydrogenase (338 aa).

Asp40 provides a ligand contact to coenzyme F420-(gamma-Glu)n. The active-site Proton donor is His41. Coenzyme F420-(gamma-Glu)n is bound by residues Thr77 and 108–109; that span reads TG. The Proton acceptor role is filled by Glu110. Coenzyme F420-(gamma-Glu)n-binding positions include Asn113, 178–179, and 181–182; these read GG and VV. Residues Thr196, Lys199, Lys260, and Arg284 each contribute to the substrate site.

It belongs to the F420-dependent glucose-6-phosphate dehydrogenase family. Homodimer.

The catalysed reaction is oxidized coenzyme F420-(gamma-L-Glu)(n) + D-glucose 6-phosphate + H(+) = 6-phospho-D-glucono-1,5-lactone + reduced coenzyme F420-(gamma-L-Glu)(n). Catalyzes the coenzyme F420-dependent oxidation of glucose 6-phosphate (G6P) to 6-phosphogluconolactone. This Gordonia bronchialis (strain ATCC 25592 / DSM 43247 / BCRC 13721 / JCM 3198 / KCTC 3076 / NBRC 16047 / NCTC 10667) (Rhodococcus bronchialis) protein is F420-dependent glucose-6-phosphate dehydrogenase.